We begin with the raw amino-acid sequence, 49 residues long: Defensin-like protein 1 (49 aa).

Disulfide bonds link Cys3–Cys49, Cys14–Cys35, Cys20–Cys43, and Cys24–Cys45.

The protein belongs to the DEFL family.

Its subcellular location is the secreted. Possesses antimicrobial activity sensitive to inorganic cations. Binds specifically to the fungal plasma membrane. Has no inhibitory effect on insect gut alpha-amylase. This Clitoria ternatea (Butterfly pea) protein is Defensin-like protein 1.